Reading from the N-terminus, the 441-residue chain is Pre-mRNA-splicing factor PRP46 (441 aa).

Disordered stretches follow at residues 1–22 and 81–107; these read MPVA…NEPS and MGAS…LTNL. The segment covering 83-107 has biased composition (polar residues); it reads ASSSALTKHTPSASQPTTHDSLTNL. WD repeat units lie at residues 130-169, 172-211, 214-253, 256-295, 298-336, 339-379, and 388-427; these read GHQG…LRLT, GHIM…VVRH, GHLS…PVVV, GHKS…TMTT, HHKK…LVLN, DQNA…QSTQ, and ESEN…TAES.

It belongs to the WD repeat PRL1/PRL2 family. In terms of assembly, associated with the spliceosome.

It is found in the cytoplasm. It localises to the nucleus. Its function is as follows. Involved in pre-mRNA splicing and required for cell cycle progression at G2/M. The protein is Pre-mRNA-splicing factor PRP46 (PRP46) of Yarrowia lipolytica (strain CLIB 122 / E 150) (Yeast).